The primary structure comprises 449 residues: Tubulin alpha-1B chain (449 aa).

Residue Gln-11 coordinates GTP. Lys-40 carries the N6-acetyllysine modification. GTP contacts are provided by Glu-71, Ser-140, Gly-144, Thr-145, Thr-179, Asn-206, and Asn-228. A Mg(2+)-binding site is contributed by Glu-71. Glu-254 is a catalytic residue.

Belongs to the tubulin family. In terms of assembly, dimer of alpha and beta chains. A typical microtubule is a hollow water-filled tube with an outer diameter of 25 nm and an inner diameter of 15 nM. Alpha-beta heterodimers associate head-to-tail to form protofilaments running lengthwise along the microtubule wall with the beta-tubulin subunit facing the microtubule plus end conferring a structural polarity. Microtubules usually have 13 protofilaments but different protofilament numbers can be found in some organisms and specialized cells. Mg(2+) is required as a cofactor. In terms of processing, acetylation of alpha chains at Lys-40 stabilizes microtubules and affects affinity and processivity of microtubule motors. This modification has a role in multiple cellular functions, ranging from cell motility, cell cycle progression or cell differentiation to intracellular trafficking and signaling.

Its subcellular location is the cytoplasm. The protein resides in the cytoskeleton. It localises to the spindle. It is found in the nucleus. The catalysed reaction is GTP + H2O = GDP + phosphate + H(+). Its function is as follows. Tubulin is the major constituent of microtubules, a cylinder consisting of laterally associated linear protofilaments composed of alpha- and beta-tubulin heterodimers. Microtubules grow by the addition of GTP-tubulin dimers to the microtubule end, where a stabilizing cap forms. Below the cap, tubulin dimers are in GDP-bound state, owing to GTPase activity of alpha-tubulin. This Physarum polycephalum (Slime mold) protein is Tubulin alpha-1B chain (ALTBN).